Consider the following 310-residue polypeptide: Aspartate carbamoyltransferase catalytic subunit (310 aa).

The carbamoyl phosphate site is built by Arg-54 and Thr-55. Lys-84 contacts L-aspartate. Carbamoyl phosphate is bound by residues Arg-105, His-134, and Gln-137. L-aspartate is bound by residues Arg-167 and Arg-229. The carbamoyl phosphate site is built by Leu-267 and Pro-268.

The protein belongs to the aspartate/ornithine carbamoyltransferase superfamily. ATCase family. As to quaternary structure, heterododecamer (2C3:3R2) of six catalytic PyrB chains organized as two trimers (C3), and six regulatory PyrI chains organized as three dimers (R2).

It catalyses the reaction carbamoyl phosphate + L-aspartate = N-carbamoyl-L-aspartate + phosphate + H(+). It participates in pyrimidine metabolism; UMP biosynthesis via de novo pathway; (S)-dihydroorotate from bicarbonate: step 2/3. Its function is as follows. Catalyzes the condensation of carbamoyl phosphate and aspartate to form carbamoyl aspartate and inorganic phosphate, the committed step in the de novo pyrimidine nucleotide biosynthesis pathway. This chain is Aspartate carbamoyltransferase catalytic subunit, found in Enterobacter sp. (strain 638).